Reading from the N-terminus, the 513-residue chain is Xylose import ATP-binding protein XylG (513 aa).

2 consecutive ABC transporter domains span residues Leu-5–Glu-242 and Leu-259–Glu-505. Residue Gly-37 to Ser-44 coordinates ATP.

This sequence belongs to the ABC transporter superfamily. Xylose importer (TC 3.A.1.2.4) family. The complex is composed of two ATP-binding proteins (XylG), two transmembrane proteins (XylH) and a solute-binding protein (XylF).

It localises to the cell inner membrane. It carries out the reaction D-xylose(out) + ATP + H2O = D-xylose(in) + ADP + phosphate + H(+). Functionally, part of the ABC transporter complex XylFGH involved in xylose import. Responsible for energy coupling to the transport system. The polypeptide is Xylose import ATP-binding protein XylG (Shigella flexneri).